The following is a 369-amino-acid chain: MTSVTLRNVCKSYGDVKISKNVDLDINSGEFVVFVGPSGCGKSTLLRCIAGLEDITSGDLYMGDKRMNDVEPSKRGVGMVFQSYALYPHLNLFDNMSFGLKLAKADKNEIKKRVDHAADILQLGHLLERQPKALSGGQRQRVAIGRTLVSQPDVFLLDEPLSNLDAALRVQMRIEIAKLHKKLGCTMIYVTHDQVEAMTMAEKIVVLDGGYVSQVGAPLELYHYPKNRFVAGFIGSPKMNFVSVFIEEVEKSQVKVQFKNGASFWIPVDGSNVKRGERMSLGIRPEHLVPAENGDAVIDGDILVVEKLGYETQIYLTIEDGDADMIYRVPDTALVKAGERFSVGIPAHRCHLFHNDGKACQRLYKEAGV.

Positions 4 to 234 (VTLRNVCKSY…PKNRFVAGFI (231 aa)) constitute an ABC transporter domain. ATP is bound at residue 36–43 (GPSGCGKS).

The protein belongs to the ABC transporter superfamily. Maltooligosaccharide importer (TC 3.A.1.1.1) family. As to quaternary structure, the complex is composed of two ATP-binding proteins (MalK), two transmembrane proteins (MalG and MalK) and a solute-binding protein (MalE).

The protein localises to the cell inner membrane. The enzyme catalyses D-maltose(out) + ATP + H2O = D-maltose(in) + ADP + phosphate + H(+). Part of the ABC transporter complex MalEFGK involved in maltose/maltodextrin import. Responsible for energy coupling to the transport system. This Aliivibrio fischeri (strain ATCC 700601 / ES114) (Vibrio fischeri) protein is Maltose/maltodextrin import ATP-binding protein MalK.